Consider the following 392-residue polypeptide: Tropomodulin (392 aa).

3 disordered regions span residues 1 to 30 (MSQA…QLPS), 59 to 90 (DLNN…GPYK), and 118 to 138 (QKRG…PENG). Positions 16-29 (SAPSANSQQGTQLP) are enriched in polar residues. Basic and acidic residues-rich tracts occupy residues 76-90 (RCRD…GPYK) and 122-138 (KVYD…PENG).

This sequence belongs to the tropomodulin family. In terms of assembly, binds to the N-terminus of actin.

It localises to the cytoplasm. The protein localises to the cytoskeleton. In terms of biological role, acts as the pointed end capping protein which maintains the length and dynamics of the actin filament. Blocks the elongation and depolymerization of the actin filaments at the pointed end. The chain is Tropomodulin (unc-94) from Caenorhabditis elegans.